Consider the following 193-residue polypeptide: Interleukin-18 (193 aa).

Residues methionine 1–aspartate 36 constitute a propeptide that is removed on maturation.

It belongs to the IL-1 family. As to quaternary structure, forms a ternary complex with ligand-binding receptor subunit IL18R1 and signaling receptor subunit IL18RAP at the plasma membrane. Mature IL18 first binds to IL18R1 forming a low affinity binary complex, which then interacts with IL18RAP to form a high affinity ternary complex that signals inside the cell. Interacts with cargo receptor TMED10; the interaction mediates the translocation from the cytoplasm into the ERGIC (endoplasmic reticulum-Golgi intermediate compartment) and thereby secretion. The pro-IL-18 precursor is processed by CASP1, CASP4 or CASP5 to yield its mature, active form. The pro-IL-18 precursor features autoinhibitory interactions between the propeptide and the post-cleavage-site region, preventing recognition by the IL18R1 receptor. Processing by CASP1, CASP4 or CASP5 induces conformational changes to generate critical receptor-binding sites. The mature form is then secreted and released in the extracellular milieu by passing through the gasdermin-D (GSDMD) pore. In contrast, cleavage by CASP3 inactivates IL18. Expressed in ovarian carcinoma but undetectable in normal ovarian epithelial cells. Resistant to proteolytic activation by caspase-1 and -4.

It is found in the cytoplasm. The protein localises to the cytosol. The protein resides in the secreted. Its function is as follows. Pro-inflammatory cytokine primarily involved in epithelial barrier repair, polarized T-helper 1 (Th1) cell and natural killer (NK) cell immune responses. Upon binding to IL18R1 and IL18RAP, forms a signaling ternary complex which activates NF-kappa-B, triggering synthesis of inflammatory mediators. Synergizes with IL12/interleukin-12 to induce IFNG synthesis from T-helper 1 (Th1) cells and natural killer (NK) cells. Involved in transduction of inflammation downstream of pyroptosis: its mature form is specifically released in the extracellular milieu by passing through the gasdermin-D (GSDMD) pore. The sequence is that of Interleukin-18 from Homo sapiens (Human).